The chain runs to 342 residues: L-threonine 3-dehydrogenase (342 aa).

A Zn(2+)-binding site is contributed by Cys-38. Catalysis depends on charge relay system residues Thr-40 and His-43. Residues His-63, Glu-64, Cys-93, Cys-96, Cys-99, and Cys-107 each contribute to the Zn(2+) site. NAD(+) is bound by residues Ile-175, Asp-195, Arg-200, 262–264, and 286–287; these read LGI and IY.

It belongs to the zinc-containing alcohol dehydrogenase family. In terms of assembly, homotetramer. Zn(2+) is required as a cofactor.

The protein localises to the cytoplasm. The catalysed reaction is L-threonine + NAD(+) = (2S)-2-amino-3-oxobutanoate + NADH + H(+). Its pathway is amino-acid degradation; L-threonine degradation via oxydo-reductase pathway; glycine from L-threonine: step 1/2. Catalyzes the NAD(+)-dependent oxidation of L-threonine to 2-amino-3-ketobutyrate. The protein is L-threonine 3-dehydrogenase of Burkholderia cenocepacia (strain HI2424).